Reading from the N-terminus, the 404-residue chain is Probable tRNA sulfurtransferase (404 aa).

The region spanning 60–165 is the THUMP domain; it reads HEVAESLKEI…DEAAYISYEN (106 aa). ATP is bound by residues 183-184, 208-209, R265, G287, and Q296; these read ML and HF.

Belongs to the ThiI family.

It is found in the cytoplasm. The enzyme catalyses [ThiI sulfur-carrier protein]-S-sulfanyl-L-cysteine + a uridine in tRNA + 2 reduced [2Fe-2S]-[ferredoxin] + ATP + H(+) = [ThiI sulfur-carrier protein]-L-cysteine + a 4-thiouridine in tRNA + 2 oxidized [2Fe-2S]-[ferredoxin] + AMP + diphosphate. It carries out the reaction [ThiS sulfur-carrier protein]-C-terminal Gly-Gly-AMP + S-sulfanyl-L-cysteinyl-[cysteine desulfurase] + AH2 = [ThiS sulfur-carrier protein]-C-terminal-Gly-aminoethanethioate + L-cysteinyl-[cysteine desulfurase] + A + AMP + 2 H(+). Its pathway is cofactor biosynthesis; thiamine diphosphate biosynthesis. In terms of biological role, catalyzes the ATP-dependent transfer of a sulfur to tRNA to produce 4-thiouridine in position 8 of tRNAs, which functions as a near-UV photosensor. Also catalyzes the transfer of sulfur to the sulfur carrier protein ThiS, forming ThiS-thiocarboxylate. This is a step in the synthesis of thiazole, in the thiamine biosynthesis pathway. The sulfur is donated as persulfide by IscS. This chain is Probable tRNA sulfurtransferase, found in Streptococcus agalactiae serotype III (strain NEM316).